The following is a 372-amino-acid chain: Nickel transporter NicT (372 aa).

8 helical membrane-spanning segments follow: residues 30-50, 55-75, 104-124, 152-172, 218-238, 245-265, 294-314, and 335-355; these read LMFA…TLLV, LSLG…TLGL, VGFF…VMLV, ISGA…VGIV, VGFL…LVLA, GLPW…MCLL, VTGL…LGLI, and TVGF…LLVW.

This sequence belongs to the NiCoT transporter (TC 2.A.52) family.

Its subcellular location is the cell membrane. The enzyme catalyses Ni(2+)(in) = Ni(2+)(out). With respect to regulation, export of the fluoroquinolone antibiotic norfloxacin is inhibited by the proton ionophore carbonyl cyanide m-chlorophenylhydrazone (CCCP). Nickel may influence the extrusion of antibiotics possibly by facilitating the proton motive force-dependent efflux process. Its function is as follows. Involved in nickel uptake. In addition, acts as a drug efflux pump and contributes to moderate tolerance towards different classes of antibiotics, including fluoroquinolones, aminoglycosides and the anti-TB drug isoniazid, with a preference for fluoroquinolones. The drug efflux function is probably dependent on proton motive force (pmf) or ion gradient, and might be facilitated by the presence of Ni(2+) ions. The protein is Nickel transporter NicT of Mycobacterium tuberculosis (strain ATCC 25618 / H37Rv).